Reading from the N-terminus, the 171-residue chain is 3-hydroxydecanoyl-[acyl-carrier-protein] dehydratase (171 aa).

Residue His-70 is part of the active site.

The protein belongs to the thioester dehydratase family. FabA subfamily. Homodimer.

The protein localises to the cytoplasm. The catalysed reaction is a (3R)-hydroxyacyl-[ACP] = a (2E)-enoyl-[ACP] + H2O. The enzyme catalyses (3R)-hydroxydecanoyl-[ACP] = (2E)-decenoyl-[ACP] + H2O. It carries out the reaction (2E)-decenoyl-[ACP] = (3Z)-decenoyl-[ACP]. Its pathway is lipid metabolism; fatty acid biosynthesis. Its function is as follows. Necessary for the introduction of cis unsaturation into fatty acids. Catalyzes the dehydration of (3R)-3-hydroxydecanoyl-ACP to E-(2)-decenoyl-ACP and then its isomerization to Z-(3)-decenoyl-ACP. Can catalyze the dehydratase reaction for beta-hydroxyacyl-ACPs with saturated chain lengths up to 16:0, being most active on intermediate chain length. This chain is 3-hydroxydecanoyl-[acyl-carrier-protein] dehydratase, found in Mesorhizobium japonicum (strain LMG 29417 / CECT 9101 / MAFF 303099) (Mesorhizobium loti (strain MAFF 303099)).